The following is a 410-amino-acid chain: Diguanylate cyclase DgcM (410 aa).

2 consecutive PAS domains span residues 3 to 70 and 129 to 198; these read THNF…NQHD and GFYA…HLPG. The 53-residue stretch at 199–251 folds into the PAC domain; the sequence is GHKPLNFIHKLADGSTRHVQTYAGPIEIYGDKLMLCIVHDITEQKRLEEQLEH. The 128-residue stretch at 283-410 folds into the GGDEF domain; it reads QDYSLLLIDT…NDGRNRVLAA (128 aa). Residue D291 coordinates Mg(2+). The substrate site is built by N299, H304, and D308. E334 lines the Mg(2+) pocket. E334 functions as the Proton acceptor in the catalytic mechanism.

It depends on Mg(2+) as a cofactor.

The enzyme catalyses 2 GTP = 3',3'-c-di-GMP + 2 diphosphate. Its pathway is purine metabolism; 3',5'-cyclic di-GMP biosynthesis. In terms of biological role, part of a signaling cascade that regulates curli biosynthesis. The cascade is composed of two cyclic-di-GMP (c-di-GMP) control modules, in which c-di-GMP controlled by the DgcE/PdeH pair (module I) regulates the activity of the DgcM/PdeR pair (module II), which in turn regulates activity of the transcription factor MlrA and expression of the master biofilm regulator csgD. The chain is Diguanylate cyclase DgcM from Escherichia coli O157:H7.